The primary structure comprises 67 residues: Conotoxin Cp1.1 (67 aa).

An N-terminal signal peptide occupies residues 1–26 (MMFRLTSVSCFLLVIACLNLFQVVLT). Disulfide bonds link cysteine 29-cysteine 43, cysteine 36-cysteine 48, cysteine 42-cysteine 52, and cysteine 47-cysteine 56. Tyrosine amide is present on tyrosine 60. Residues 64-67 (ATFQ) constitute a propeptide that is removed on maturation.

The protein belongs to the conotoxin I2 superfamily. Expressed by the venom duct.

Its subcellular location is the secreted. The chain is Conotoxin Cp1.1 from Conus capitaneus (Captain cone).